The following is a 380-amino-acid chain: Cyclohex-1-ene-1-carbonyl-CoA dehydrogenase (380 aa).

Asp91 functions as the Proton acceptor in the catalytic mechanism. Residues Leu122, Ala124, Thr125, Ser131, and Thr157 each contribute to the FAD site. Cyclohex-1-ene-1-carbonyl-CoA is bound at residue Ser131. Ser131 is a cyclohexa-1,5-diene-1-carbonyl-CoA binding site. Residues Lys178, Arg242, and Thr363 each coordinate cyclohex-1-ene-1-carbonyl-CoA. The cyclohexa-1,5-diene-1-carbonyl-CoA site is built by Lys178, Arg242, and Thr363. Residues Thr365 and Gln367 each contribute to the FAD site. Arg375 serves as a coordination point for cyclohex-1-ene-1-carbonyl-CoA. Arg375 lines the cyclohexa-1,5-diene-1-carbonyl-CoA pocket.

This sequence belongs to the acyl-CoA dehydrogenase family. In terms of assembly, homotetramer. FAD is required as a cofactor.

The catalysed reaction is cyclohex-1-ene-1-carbonyl-CoA + oxidized [electron-transfer flavoprotein] + H(+) = cyclohexa-1,5-diene-1-carbonyl-CoA + reduced [electron-transfer flavoprotein]. In terms of biological role, acyl-CoA dehydrogenase involved in the anaerobic degradation of cyclohexane carboxylic acid (CHC). Catalyzes the 1,4-dehydrogenation at C3 and C6 of cyclohex-1-ene-1-carbonyl-CoA (CHeneCoA or Ch1CoA) to cyclohexa-1,5-diene-1-carbonyl-CoA (CHdieneCoA or Ch1,5CoA). Also able to catalyze, at a lower rate, the dehydrogenation at C3 and C4 of CHdieneCoA to benzoyl-CoA. This is Cyclohex-1-ene-1-carbonyl-CoA dehydrogenase from Geobacter metallireducens (strain ATCC 53774 / DSM 7210 / GS-15).